The primary structure comprises 291 residues: Quinol oxidase subunit 2 (291 aa).

Residues 1-28 form the signal peptide; the sequence is MQLKKAFWKLASLLPXSLLLFLGGCDKK. The next 2 helical transmembrane spans lie at 49–69 and 91–111; these read SFLL…VILI and LEII…IPTV.

Belongs to the cytochrome c oxidase subunit 2 family.

Its subcellular location is the cell membrane. The catalysed reaction is 2 a quinol + O2 = 2 a quinone + 2 H2O. Functionally, catalyzes quinol oxidation with the concomitant reduction of oxygen to water. Subunit II transfers the electrons from a quinol to the binuclear center of the catalytic subunit I. The polypeptide is Quinol oxidase subunit 2 (Bacillus cereus (strain ATCC 10987 / NRS 248)).